Consider the following 311-residue polypeptide: Tricarboxylate transport protein, mitochondrial (311 aa).

Positions M1–A13 are cleaved as a propeptide — removed in mature form. Positions M1–P15 are enriched in low complexity. The interval M1 to L22 is disordered. Solcar repeat units follow at residues T23–H111, T122–W208, and M218–L303. 3 helical membrane-spanning segments follow: residues I29–T46, G86–F105, and L129–M143. S156 carries the post-translational modification Phosphoserine. 3 consecutive transmembrane segments (helical) span residues G183–M202, G224–L241, and G278–Y297.

The protein belongs to the mitochondrial carrier (TC 2.A.29) family. Post-translationally, possesses a short cleavable presequence, which, however, is found to be dispensable both for targeting to mitochondria and insertion into the inner membrane. However, the presequence is required to keep SLC25A1 in a soluble state and thus in an import-competent state. Mature SLC25A1 lacking the presequence is prone to aggregation.

The protein resides in the mitochondrion inner membrane. It is found in the mitochondrion membrane. It catalyses the reaction (S)-malate(in) + citrate(out) = (S)-malate(out) + citrate(in). It carries out the reaction D-threo-isocitrate(in) + citrate(out) = D-threo-isocitrate(out) + citrate(in). The catalysed reaction is citrate(out) + succinate(in) = citrate(in) + succinate(out). The enzyme catalyses phosphoenolpyruvate(in) + citrate(out) = phosphoenolpyruvate(out) + citrate(in). It catalyses the reaction cis-aconitate(in) + citrate(out) = cis-aconitate(out) + citrate(in). It carries out the reaction trans-aconitate(in) + citrate(out) = trans-aconitate(out) + citrate(in). The catalysed reaction is maleate(in) + citrate(out) = maleate(out) + citrate(in). Its function is as follows. Mitochondrial electroneutral antiporter that exports citrate from the mitochondria into the cytosol in exchange for malate. Also able to mediate the exchange of citrate for isocitrate, phosphoenolpyruvate, cis-aconitate and to a lesser extent trans-aconitate, maleate and succinate. In the cytoplasm, citrate plays important roles in fatty acid and sterol synthesis, regulation of glycolysis, protein acetylation, and other physiopathological processes. The sequence is that of Tricarboxylate transport protein, mitochondrial (SLC25A1) from Bos taurus (Bovine).